We begin with the raw amino-acid sequence, 349 residues long: tRNA N6-adenosine threonylcarbamoyltransferase (349 aa).

Fe cation-binding residues include H111 and H115. Residues 134–138, D167, G180, D184, and N279 contribute to the substrate site; that span reads LVSGG. Residue D307 participates in Fe cation binding.

Belongs to the KAE1 / TsaD family. Fe(2+) serves as cofactor.

Its subcellular location is the cytoplasm. The catalysed reaction is L-threonylcarbamoyladenylate + adenosine(37) in tRNA = N(6)-L-threonylcarbamoyladenosine(37) in tRNA + AMP + H(+). Its function is as follows. Required for the formation of a threonylcarbamoyl group on adenosine at position 37 (t(6)A37) in tRNAs that read codons beginning with adenine. Is involved in the transfer of the threonylcarbamoyl moiety of threonylcarbamoyl-AMP (TC-AMP) to the N6 group of A37, together with TsaE and TsaB. TsaD likely plays a direct catalytic role in this reaction. The protein is tRNA N6-adenosine threonylcarbamoyltransferase of Nostoc punctiforme (strain ATCC 29133 / PCC 73102).